Consider the following 461-residue polypeptide: O-methyltransferase CTB2 (461 aa).

S-adenosyl-L-methionine is bound at residue Asp-288. His-339 functions as the Proton acceptor in the catalytic mechanism.

The protein belongs to the class I-like SAM-binding methyltransferase superfamily. Cation-independent O-methyltransferase family. COMT subfamily.

It participates in mycotoxin biosynthesis. Its function is as follows. O-methyltransferase; part of the gene cluster that mediates the biosynthesis of cercosporin, a light-activated, non-host-selective toxin. The perylenequinone chromophore of cercosporin absorbs light energy to attain an electronically-activated triplet state and produces active oxygen species such as the hydroxyl radical, superoxide, hydrogen peroxide or singlet oxygen upon reaction with oxygen molecules. These reactive oxygen species cause damage to various cellular components including lipids, proteins and nucleic acids. The first step of cercosporin biosynthesis is performed by the polyketide synthase CTB1 which catalyzes the formation of nor-toralactone. The starter unit acyltransferase (SAT) domain of CTB1 initiates polyketide extension by the selective utilization of acetyl-CoA, which is elongated to the heptaketide in the beta-ketoacyl synthase (KS) domain by successive condensations with six malonyl units introduced by the malonyl acyltransferase (MAT) domain. The product template (PT) domain catalyzes C4-C9 and C2-C11 aldol cyclizations and dehydrations to a trihydroxynaphthalene, which is thought to be delivered to the thioesterase (TE) domain for product release. The bifunctional enzyme CTB3 then methylates nor-toralactone to toralactone before conducting an unusual oxidative aromatic ring opening. The O-methyltransferase CTB2 further methylates the nascent OH-6 of the CBT3 product, blocking further oxidation at this site before the reductase CTB6 reduces the 2-oxopropyl ketone at position C7, giving naphthalene. The FAD-dependent monooxygenase CTB5 in concert with the multicopper oxidase CTB12 are responsible for homodimerization of naphthalene with CTB7 installing the dioxepine moiety, finally producing cercosporin. The fasciclin domain-containing protein CTB11 might act with CTB5 and CTB12 whereas the roles of CTB9 and CTB10 have still to be elucidated. The polypeptide is O-methyltransferase CTB2 (Cercospora nicotianae (Barn spot disease fungus)).